The primary structure comprises 312 residues: DNA-directed RNA polymerase subunit alpha (312 aa).

Residues 1 to 229 are alpha N-terminal domain (alpha-NTD); that stretch reads MLQYQIDRID…ELFQPLATVS (229 aa). The interval 239–312 is alpha C-terminal domain (alpha-CTD); sequence EPAAEAQIPL…ISIPQSRTSA (74 aa).

Belongs to the RNA polymerase alpha chain family. In cyanobacteria the RNAP catalytic core is composed of 2 alpha, 1 beta, 1 beta', 1 gamma and 1 omega subunit. When a sigma factor is associated with the core the holoenzyme is formed, which can initiate transcription.

The enzyme catalyses RNA(n) + a ribonucleoside 5'-triphosphate = RNA(n+1) + diphosphate. Its function is as follows. DNA-dependent RNA polymerase catalyzes the transcription of DNA into RNA using the four ribonucleoside triphosphates as substrates. The polypeptide is DNA-directed RNA polymerase subunit alpha (Prochlorococcus marinus (strain NATL1A)).